A 193-amino-acid polypeptide reads, in one-letter code: FMN-dependent NADH:quinone oxidoreductase 1 (193 aa).

FMN contacts are provided by residues serine 9, 15–17 (SIS), and 85–88 (MYNF).

The protein belongs to the azoreductase type 1 family. Homodimer. It depends on FMN as a cofactor.

The enzyme catalyses 2 a quinone + NADH + H(+) = 2 a 1,4-benzosemiquinone + NAD(+). The catalysed reaction is N,N-dimethyl-1,4-phenylenediamine + anthranilate + 2 NAD(+) = 2-(4-dimethylaminophenyl)diazenylbenzoate + 2 NADH + 2 H(+). In terms of biological role, quinone reductase that provides resistance to thiol-specific stress caused by electrophilic quinones. Functionally, also exhibits azoreductase activity. Catalyzes the reductive cleavage of the azo bond in aromatic azo compounds to the corresponding amines. This is FMN-dependent NADH:quinone oxidoreductase 1 from Xanthomonas axonopodis pv. citri (strain 306).